The chain runs to 201 residues: Large ribosomal subunit protein uL4 (201 aa).

The disordered stretch occupies residues 46-71 (QKTRAEVIGSGKKPWRQKGTGRARAG).

It belongs to the universal ribosomal protein uL4 family. In terms of assembly, part of the 50S ribosomal subunit.

Its function is as follows. One of the primary rRNA binding proteins, this protein initially binds near the 5'-end of the 23S rRNA. It is important during the early stages of 50S assembly. It makes multiple contacts with different domains of the 23S rRNA in the assembled 50S subunit and ribosome. Forms part of the polypeptide exit tunnel. The polypeptide is Large ribosomal subunit protein uL4 (Shewanella sediminis (strain HAW-EB3)).